Consider the following 127-residue polypeptide: Aspartate 1-decarboxylase (127 aa).

Serine 25 serves as the catalytic Schiff-base intermediate with substrate; via pyruvic acid. Pyruvic acid (Ser) is present on serine 25. Residue threonine 57 coordinates substrate. Tyrosine 58 functions as the Proton donor in the catalytic mechanism. Substrate is bound at residue 73-75 (GAA).

This sequence belongs to the PanD family. In terms of assembly, heterooctamer of four alpha and four beta subunits. Requires pyruvate as cofactor. Post-translationally, is synthesized initially as an inactive proenzyme, which is activated by self-cleavage at a specific serine bond to produce a beta-subunit with a hydroxyl group at its C-terminus and an alpha-subunit with a pyruvoyl group at its N-terminus.

Its subcellular location is the cytoplasm. The enzyme catalyses L-aspartate + H(+) = beta-alanine + CO2. It participates in cofactor biosynthesis; (R)-pantothenate biosynthesis; beta-alanine from L-aspartate: step 1/1. Its function is as follows. Catalyzes the pyruvoyl-dependent decarboxylation of aspartate to produce beta-alanine. This Staphylococcus aureus (strain JH1) protein is Aspartate 1-decarboxylase.